The following is a 390-amino-acid chain: L-serine phosphate decarboxylase Cj1436c (390 aa).

The residue at position 243 (Lys-243) is an N6-(pyridoxal phosphate)lysine.

Belongs to the class-I pyridoxal-phosphate-dependent aminotransferase family. Pyridoxal 5'-phosphate serves as cofactor.

The enzyme catalyses O-phospho-L-serine + H(+) = phosphoethanolamine + CO2. It functions in the pathway capsule biogenesis; capsule polysaccharide biosynthesis. Functionally, pyridoxal phosphate (PLP)-dependent decarboxylase involved in the biosynthesis of amidated D-glucuronic acid structures found on the capsular polysaccharide (CPS) of C.jejuni. Catalyzes the decarboxylation of L-serine phosphate to ethanolamine phosphate. Less active with L-threonine phosphate. No activity with L-serine, L-threonine, L-aspartate or L-glutamate. This chain is L-serine phosphate decarboxylase Cj1436c, found in Campylobacter jejuni subsp. jejuni serotype O:2 (strain ATCC 700819 / NCTC 11168).